We begin with the raw amino-acid sequence, 161 residues long: Cyclic pyranopterin monophosphate synthase (161 aa).

Residues 75-77 (LCH) and 113-114 (ME) each bind substrate. The active site involves Asp128.

This sequence belongs to the MoaC family. Homohexamer; trimer of dimers.

The catalysed reaction is (8S)-3',8-cyclo-7,8-dihydroguanosine 5'-triphosphate = cyclic pyranopterin phosphate + diphosphate. The protein operates within cofactor biosynthesis; molybdopterin biosynthesis. In terms of biological role, catalyzes the conversion of (8S)-3',8-cyclo-7,8-dihydroguanosine 5'-triphosphate to cyclic pyranopterin monophosphate (cPMP). The polypeptide is Cyclic pyranopterin monophosphate synthase (Salmonella arizonae (strain ATCC BAA-731 / CDC346-86 / RSK2980)).